We begin with the raw amino-acid sequence, 271 residues long: MPELPEVEVISNFLLDKIKNKQISNVIVNNWNLRAPITKNIDDMLKGKVIRNIKRRGKYTIWNTDGSMAVIIHLGMSGKLIYAEHDQAQNKHDHVVFLFSDNTSIIFNDPRRFGLVIVLNKEQEINFFDDFGIEPLTDEFSGDYLQELLKNKKANIKSALMDNKLIVGVGNIYASESLFRARISPLRPAKNLTYREYEKLAAEIKNTLSDAIAAGGSTLKDYAQPSGSAGYFQNNFYVYGKVQKPCKICNNIITLIRQNGRSTYFCNACQN.

The Schiff-base intermediate with DNA role is filled by P2. E3 (proton donor) is an active-site residue. The Proton donor; for beta-elimination activity role is filled by K58. DNA contacts are provided by H92, R111, and K152. The FPG-type zinc-finger motif lies at 237 to 271 (YVYGKVQKPCKICNNIITLIRQNGRSTYFCNACQN). The active-site Proton donor; for delta-elimination activity is the R261.

This sequence belongs to the FPG family. As to quaternary structure, monomer. Requires Zn(2+) as cofactor.

It carries out the reaction Hydrolysis of DNA containing ring-opened 7-methylguanine residues, releasing 2,6-diamino-4-hydroxy-5-(N-methyl)formamidopyrimidine.. The catalysed reaction is 2'-deoxyribonucleotide-(2'-deoxyribose 5'-phosphate)-2'-deoxyribonucleotide-DNA = a 3'-end 2'-deoxyribonucleotide-(2,3-dehydro-2,3-deoxyribose 5'-phosphate)-DNA + a 5'-end 5'-phospho-2'-deoxyribonucleoside-DNA + H(+). In terms of biological role, involved in base excision repair of DNA damaged by oxidation or by mutagenic agents. Acts as a DNA glycosylase that recognizes and removes damaged bases. Has a preference for oxidized purines, such as 7,8-dihydro-8-oxoguanine (8-oxoG). Has AP (apurinic/apyrimidinic) lyase activity and introduces nicks in the DNA strand. Cleaves the DNA backbone by beta-delta elimination to generate a single-strand break at the site of the removed base with both 3'- and 5'-phosphates. The chain is Formamidopyrimidine-DNA glycosylase from Wolbachia sp. subsp. Drosophila simulans (strain wRi).